A 353-amino-acid polypeptide reads, in one-letter code: Uroporphyrinogen decarboxylase (353 aa).

Residues 27–31, Phe-46, Asp-76, Tyr-152, Ser-207, and His-321 each bind substrate; that span reads RQAGR.

This sequence belongs to the uroporphyrinogen decarboxylase family. As to quaternary structure, homodimer.

Its subcellular location is the cytoplasm. The catalysed reaction is uroporphyrinogen III + 4 H(+) = coproporphyrinogen III + 4 CO2. It participates in porphyrin-containing compound metabolism; protoporphyrin-IX biosynthesis; coproporphyrinogen-III from 5-aminolevulinate: step 4/4. Its function is as follows. Catalyzes the decarboxylation of four acetate groups of uroporphyrinogen-III to yield coproporphyrinogen-III. In Listeria monocytogenes serotype 4b (strain CLIP80459), this protein is Uroporphyrinogen decarboxylase.